A 421-amino-acid polypeptide reads, in one-letter code: Medium-chain specific acyl-CoA dehydrogenase, mitochondrial (421 aa).

A mitochondrion-targeting transit peptide spans 1–25 (MAAAFRRGCRVLRSVSHFECRTQHS). N6-acetyllysine; alternate occurs at positions 30 and 69. An N6-succinyllysine; alternate mark is found at lysine 30 and lysine 69. Lysine 79 carries the N6-acetyllysine modification. An FAD-binding site is contributed by 158–167 (YCVTEPSAGS). Serine 167 contacts octanoyl-CoA. Lysine 179 is modified (N6-succinyllysine). Residue 191–193 (WIT) coordinates FAD. N6-acetyllysine; alternate is present on lysine 212. Lysine 212 is subject to N6-succinyllysine; alternate. Serine 216 contributes to the octanoyl-CoA binding site. N6-acetyllysine; alternate is present on residues lysine 217, lysine 235, lysine 259, and lysine 271. An N6-succinyllysine; alternate mark is found at lysine 217, lysine 235, lysine 259, and lysine 271. Residues aspartate 278 and arginine 281 each coordinate octanoyl-CoA. An N6-acetyllysine modification is found at lysine 301. Residues 306-308 (RKT) and 316-317 (HQ) contribute to the FAD site. The octanoyl-CoA site is built by arginine 349 and threonine 351. Threonine 351 bears the Phosphothreonine mark. An FAD-binding site is contributed by 374 to 378 (QIFGG). Residue glutamate 401 participates in octanoyl-CoA binding. Catalysis depends on glutamate 401, which acts as the Proton acceptor. 402–405 (GTAQ) is a binding site for FAD.

Belongs to the acyl-CoA dehydrogenase family. In terms of assembly, homotetramer. Interacts with the heterodimeric electron transfer flavoprotein ETF. Requires FAD as cofactor. Post-translationally, acetylated. Could occur at proximity of the cofactor-binding sites and reduce the catalytic activity. Could be deacetylated by SIRT3.

The protein resides in the mitochondrion matrix. The enzyme catalyses a medium-chain 2,3-saturated fatty acyl-CoA + oxidized [electron-transfer flavoprotein] + H(+) = a medium-chain (2E)-enoyl-CoA + reduced [electron-transfer flavoprotein]. It carries out the reaction pentanoyl-CoA + oxidized [electron-transfer flavoprotein] + H(+) = (2E)-pentenoyl-CoA + reduced [electron-transfer flavoprotein]. It catalyses the reaction hexanoyl-CoA + oxidized [electron-transfer flavoprotein] + H(+) = (2E)-hexenoyl-CoA + reduced [electron-transfer flavoprotein]. The catalysed reaction is octanoyl-CoA + oxidized [electron-transfer flavoprotein] + H(+) = (2E)-octenoyl-CoA + reduced [electron-transfer flavoprotein]. The enzyme catalyses decanoyl-CoA + oxidized [electron-transfer flavoprotein] + H(+) = (2E)-decenoyl-CoA + reduced [electron-transfer flavoprotein]. It carries out the reaction dodecanoyl-CoA + oxidized [electron-transfer flavoprotein] + H(+) = (2E)-dodecenoyl-CoA + reduced [electron-transfer flavoprotein]. It catalyses the reaction tetradecanoyl-CoA + oxidized [electron-transfer flavoprotein] + H(+) = (2E)-tetradecenoyl-CoA + reduced [electron-transfer flavoprotein]. The catalysed reaction is oxidized [electron-transfer flavoprotein] + hexadecanoyl-CoA + H(+) = (2E)-hexadecenoyl-CoA + reduced [electron-transfer flavoprotein]. It participates in lipid metabolism; mitochondrial fatty acid beta-oxidation. Medium-chain specific acyl-CoA dehydrogenase is one of the acyl-CoA dehydrogenases that catalyze the first step of mitochondrial fatty acid beta-oxidation, an aerobic process breaking down fatty acids into acetyl-CoA and allowing the production of energy from fats. The first step of fatty acid beta-oxidation consists in the removal of one hydrogen from C-2 and C-3 of the straight-chain fatty acyl-CoA thioester, resulting in the formation of trans-2-enoyl-CoA. Electron transfer flavoprotein (ETF) is the electron acceptor that transfers electrons to the main mitochondrial respiratory chain via ETF-ubiquinone oxidoreductase (ETF dehydrogenase). Among the different mitochondrial acyl-CoA dehydrogenases, medium-chain specific acyl-CoA dehydrogenase acts specifically on acyl-CoAs with saturated 6 to 12 carbons long primary chains. The protein is Medium-chain specific acyl-CoA dehydrogenase, mitochondrial of Mus musculus (Mouse).